A 158-amino-acid polypeptide reads, in one-letter code: 6,7-dimethyl-8-ribityllumazine synthase (158 aa).

Residues F23, S61–E63, and A85–I87 contribute to the 5-amino-6-(D-ribitylamino)uracil site. D90–T91 lines the (2S)-2-hydroxy-3-oxobutyl phosphate pocket. H93 (proton donor) is an active-site residue. Y118 provides a ligand contact to 5-amino-6-(D-ribitylamino)uracil. R132 serves as a coordination point for (2S)-2-hydroxy-3-oxobutyl phosphate.

It belongs to the DMRL synthase family.

It catalyses the reaction (2S)-2-hydroxy-3-oxobutyl phosphate + 5-amino-6-(D-ribitylamino)uracil = 6,7-dimethyl-8-(1-D-ribityl)lumazine + phosphate + 2 H2O + H(+). The protein operates within cofactor biosynthesis; riboflavin biosynthesis; riboflavin from 2-hydroxy-3-oxobutyl phosphate and 5-amino-6-(D-ribitylamino)uracil: step 1/2. Catalyzes the formation of 6,7-dimethyl-8-ribityllumazine by condensation of 5-amino-6-(D-ribitylamino)uracil with 3,4-dihydroxy-2-butanone 4-phosphate. This is the penultimate step in the biosynthesis of riboflavin. The chain is 6,7-dimethyl-8-ribityllumazine synthase from Prochlorococcus marinus (strain MIT 9211).